Reading from the N-terminus, the 115-residue chain is Large ribosomal subunit protein uL24 (115 aa).

2 disordered regions span residues Val45–Lys77 and Lys96–Ser115.

It belongs to the universal ribosomal protein uL24 family. Part of the 50S ribosomal subunit.

One of two assembly initiator proteins, it binds directly to the 5'-end of the 23S rRNA, where it nucleates assembly of the 50S subunit. Functionally, one of the proteins that surrounds the polypeptide exit tunnel on the outside of the subunit. The polypeptide is Large ribosomal subunit protein uL24 (Rhodopirellula baltica (strain DSM 10527 / NCIMB 13988 / SH1)).